The chain runs to 609 residues: Pair-rule protein odd-paired (609 aa).

Positions 20-41 are disordered; that stretch reads RMSPNTTASNSNAQQQQQQQLE. Residues 22–32 are compositionally biased toward polar residues; the sequence is SPNTTASNSNA. The C2H2-type 1; atypical zinc-finger motif lies at 210-249; it reads MQCLWIDPDQPGLVPPGGRKTCNKVFHSMHEIVTHLTVEH. C2H2-type zinc fingers lie at residues 258 to 285, 291 to 315, 321 to 345, and 351 to 375; these read HACF…IRVH, FACP…KRTH, FKCE…SHVH, and YNCR…MKVH. Disordered stretches follow at residues 373–550 and 583–609; these read KVHG…ASAS and EAMN…ATAY. Over residues 399-409 the composition is skewed to polar residues; sequence IITGGAQTPPS. Composition is skewed to low complexity over residues 414-434 and 449-498; these read GSAG…IKSS and HLGA…LTAH. Over residues 528 to 537 the composition is skewed to basic residues; it reads SHHHHPHHHQ. The segment covering 538–550 has biased composition (low complexity); that stretch reads AAPSPGAAAASAS. Basic residues predominate over residues 591 to 601; sequence FGHHHHHHHLM.

This sequence belongs to the GLI C2H2-type zinc-finger protein family. Expressed throughout all segment primordia; expressed ubiquitously in the ectoderm and mesoderm precursors.

Its subcellular location is the nucleus. Its function is as follows. Transcription factor essential for parasegmental subdivision of the embryo. It is involved in the activation of wingless (wg) in odd parasegments. It is also required for the timely activation of wg in the remaining parasegments and for the timely activation of engrailed (en) in all parasegments. The sequence is that of Pair-rule protein odd-paired (opa) from Drosophila melanogaster (Fruit fly).